Consider the following 598-residue polypeptide: (+)-bornyl diphosphate synthase, chloroplastic (598 aa).

A chloroplast-targeting transit peptide spans 1 to 54; sequence MSIISMNVSILSKPLNCLHNLERRPSKALLVPCTAPTARLRASCSSKLQEAHQI. Arg-314 lines the substrate pocket. Residues Asp-351 and Asp-355 each contribute to the Mg(2+) site. Positions 351–355 match the DDXXD motif motif; that stretch reads DDIYD. Substrate is bound at residue Arg-493. Positions 496, 500, and 504 each coordinate Mg(2+). Thr-500 lines the substrate pocket. Lys-512 provides a ligand contact to substrate.

Belongs to the terpene synthase family. As to quaternary structure, homodimer. Mg(2+) is required as a cofactor.

The protein localises to the plastid. The protein resides in the chloroplast. The catalysed reaction is (2E)-geranyl diphosphate = (2S,4R)-bornyl diphosphate. The enzyme catalyses (2E)-geranyl diphosphate = (1R,4S)-camphene + diphosphate. It catalyses the reaction (2E)-geranyl diphosphate = (1R,5R)-alpha-pinene + diphosphate. It functions in the pathway terpene metabolism; (R)-camphor biosynthesis. Its function is as follows. Catalyzes the formation of the (+)-camphor precursor (+)-bornyl diphosphate from geranyl diphosphate. The enzyme also produces significant amounts of (+)-alpha-pinene, (+)-camphene, and (+-)-limonene. The protein is (+)-bornyl diphosphate synthase, chloroplastic of Salvia officinalis (Sage).